Reading from the N-terminus, the 409-residue chain is Elongation factor Tu (409 aa).

A tr-type G domain is found at 10–214 (KPHVNVGTIG…AVDNYIPTPE (205 aa)). Residues 19–26 (GHVDHGKT) are G1. 19–26 (GHVDHGKT) contacts GTP. Mg(2+) is bound at residue T26. Residues 60 to 64 (GITIN) form a G2 region. Residues 81–84 (DCPG) form a G3 region. Residues 81 to 85 (DCPGH) and 136 to 139 (NKVD) contribute to the GTP site. The G4 stretch occupies residues 136-139 (NKVD). The tract at residues 174–176 (SGL) is G5.

Belongs to the TRAFAC class translation factor GTPase superfamily. Classic translation factor GTPase family. EF-Tu/EF-1A subfamily. Monomer.

It is found in the cytoplasm. It carries out the reaction GTP + H2O = GDP + phosphate + H(+). In terms of biological role, GTP hydrolase that promotes the GTP-dependent binding of aminoacyl-tRNA to the A-site of ribosomes during protein biosynthesis. This Thermosynechococcus vestitus (strain NIES-2133 / IAM M-273 / BP-1) protein is Elongation factor Tu.